The chain runs to 615 residues: Chaperone protein DnaK (615 aa).

A Phosphothreonine; by autocatalysis modification is found at T175. The tract at residues 573–615 is disordered; sequence SQEMYQKAAQEQQAAQGAEQAQDNGPKDDNVVDADFKEVDEDK. The span at 580-594 shows a compositional bias: low complexity; the sequence is AAQEQQAAQGAEQAQ. The segment covering 597 to 609 has biased composition (basic and acidic residues); sequence GPKDDNVVDADFK.

The protein belongs to the heat shock protein 70 family.

Acts as a chaperone. This chain is Chaperone protein DnaK, found in Clostridioides difficile (strain 630) (Peptoclostridium difficile).